Here is a 224-residue protein sequence, read N- to C-terminus: Orotate phosphoribosyltransferase (224 aa).

Lysine 29 contributes to the 5-phospho-alpha-D-ribose 1-diphosphate binding site. 37 to 38 provides a ligand contact to orotate; the sequence is FF. Residues 75 to 76, arginine 105, lysine 106, lysine 109, histidine 111, and 130 to 138 each bind 5-phospho-alpha-D-ribose 1-diphosphate; these read YK and DDVITAGTS. Residues threonine 134 and arginine 162 each coordinate orotate.

It belongs to the purine/pyrimidine phosphoribosyltransferase family. PyrE subfamily. As to quaternary structure, homodimer. It depends on Mg(2+) as a cofactor.

The enzyme catalyses orotidine 5'-phosphate + diphosphate = orotate + 5-phospho-alpha-D-ribose 1-diphosphate. Its pathway is pyrimidine metabolism; UMP biosynthesis via de novo pathway; UMP from orotate: step 1/2. In terms of biological role, catalyzes the transfer of a ribosyl phosphate group from 5-phosphoribose 1-diphosphate to orotate, leading to the formation of orotidine monophosphate (OMP). This chain is Orotate phosphoribosyltransferase, found in Bordetella bronchiseptica (strain ATCC BAA-588 / NCTC 13252 / RB50) (Alcaligenes bronchisepticus).